Consider the following 254-residue polypeptide: Urease accessory protein UreD (254 aa).

This sequence belongs to the UreD family. In terms of assembly, ureD, UreF and UreG form a complex that acts as a GTP-hydrolysis-dependent molecular chaperone, activating the urease apoprotein by helping to assemble the nickel containing metallocenter of UreC. The UreE protein probably delivers the nickel.

It is found in the cytoplasm. In terms of biological role, required for maturation of urease via the functional incorporation of the urease nickel metallocenter. The chain is Urease accessory protein UreD from Streptomyces coelicolor (strain ATCC BAA-471 / A3(2) / M145).